The primary structure comprises 130 residues: ATP synthase epsilon chain (130 aa).

It belongs to the ATPase epsilon chain family. F-type ATPases have 2 components, CF(1) - the catalytic core - and CF(0) - the membrane proton channel. CF(1) has five subunits: alpha(3), beta(3), gamma(1), delta(1), epsilon(1). CF(0) has three main subunits: a, b and c.

The protein localises to the cell inner membrane. In terms of biological role, produces ATP from ADP in the presence of a proton gradient across the membrane. The protein is ATP synthase epsilon chain of Campylobacter lari (strain RM2100 / D67 / ATCC BAA-1060).